A 278-amino-acid polypeptide reads, in one-letter code: Digeranylgeranylglyceryl phosphate synthase (278 aa).

8 consecutive transmembrane segments (helical) span residues 17–37 (MASF…LEMV), 40–60 (LIFA…LNDI), 91–111 (LLVF…LMAV), 129–149 (IIGN…GGIA), 153–173 (IDVT…REII), 204–224 (LLLV…FFGI), 226–246 (YLIS…PLLI), and 257–277 (SRNI…GSFF).

Belongs to the UbiA prenyltransferase family. DGGGP synthase subfamily. Mg(2+) serves as cofactor.

It localises to the cell membrane. It carries out the reaction sn-3-O-(geranylgeranyl)glycerol 1-phosphate + (2E,6E,10E)-geranylgeranyl diphosphate = 2,3-bis-O-(geranylgeranyl)-sn-glycerol 1-phosphate + diphosphate. The protein operates within membrane lipid metabolism; glycerophospholipid metabolism. Prenyltransferase that catalyzes the transfer of the geranylgeranyl moiety of geranylgeranyl diphosphate (GGPP) to the C2 hydroxyl of (S)-3-O-geranylgeranylglyceryl phosphate (GGGP). This reaction is the second ether-bond-formation step in the biosynthesis of archaeal membrane lipids. The sequence is that of Digeranylgeranylglyceryl phosphate synthase from Methanococcus maripaludis (strain C5 / ATCC BAA-1333).